Consider the following 192-residue polypeptide: Probable nicotinate-nucleotide adenylyltransferase (192 aa).

This sequence belongs to the NadD family.

The catalysed reaction is nicotinate beta-D-ribonucleotide + ATP + H(+) = deamido-NAD(+) + diphosphate. The protein operates within cofactor biosynthesis; NAD(+) biosynthesis; deamido-NAD(+) from nicotinate D-ribonucleotide: step 1/1. Its function is as follows. Catalyzes the reversible adenylation of nicotinate mononucleotide (NaMN) to nicotinic acid adenine dinucleotide (NaAD). The protein is Probable nicotinate-nucleotide adenylyltransferase of Rhizobium etli (strain CIAT 652).